The chain runs to 268 residues: tRNA (guanine-N(1)-)-methyltransferase (268 aa).

Residues G113 and 133–138 (IGDYVL) each bind S-adenosyl-L-methionine. The tract at residues 238–268 (RCPPDPFAHQGPVYEGDQLERPEGGEQGASR) is disordered.

Belongs to the RNA methyltransferase TrmD family. In terms of assembly, homodimer.

Its subcellular location is the cytoplasm. The enzyme catalyses guanosine(37) in tRNA + S-adenosyl-L-methionine = N(1)-methylguanosine(37) in tRNA + S-adenosyl-L-homocysteine + H(+). Its function is as follows. Specifically methylates guanosine-37 in various tRNAs. This chain is tRNA (guanine-N(1)-)-methyltransferase, found in Thermomicrobium roseum (strain ATCC 27502 / DSM 5159 / P-2).